We begin with the raw amino-acid sequence, 226 residues long: Phosphoribosylformylglycinamidine synthase subunit PurQ (226 aa).

Residues 2–226 (KFAVIQFPGS…LKNFLVTVKN (225 aa)) enclose the Glutamine amidotransferase type-1 domain. The Nucleophile role is filled by C86. Residues H195 and E197 contribute to the active site.

Part of the FGAM synthase complex composed of 1 PurL, 1 PurQ and 2 PurS subunits.

The protein resides in the cytoplasm. The catalysed reaction is N(2)-formyl-N(1)-(5-phospho-beta-D-ribosyl)glycinamide + L-glutamine + ATP + H2O = 2-formamido-N(1)-(5-O-phospho-beta-D-ribosyl)acetamidine + L-glutamate + ADP + phosphate + H(+). It catalyses the reaction L-glutamine + H2O = L-glutamate + NH4(+). It participates in purine metabolism; IMP biosynthesis via de novo pathway; 5-amino-1-(5-phospho-D-ribosyl)imidazole from N(2)-formyl-N(1)-(5-phospho-D-ribosyl)glycinamide: step 1/2. Its function is as follows. Part of the phosphoribosylformylglycinamidine synthase complex involved in the purines biosynthetic pathway. Catalyzes the ATP-dependent conversion of formylglycinamide ribonucleotide (FGAR) and glutamine to yield formylglycinamidine ribonucleotide (FGAM) and glutamate. The FGAM synthase complex is composed of three subunits. PurQ produces an ammonia molecule by converting glutamine to glutamate. PurL transfers the ammonia molecule to FGAR to form FGAM in an ATP-dependent manner. PurS interacts with PurQ and PurL and is thought to assist in the transfer of the ammonia molecule from PurQ to PurL. The chain is Phosphoribosylformylglycinamidine synthase subunit PurQ from Lactococcus lactis subsp. cremoris (Streptococcus cremoris).